A 197-amino-acid chain; its full sequence is dITP/XTP pyrophosphatase (197 aa).

9–14 (TNNLNK) lines the substrate pocket. The Mg(2+) site is built by E42 and D71. The Proton acceptor role is filled by D71. Substrate is bound by residues S72, 153–156 (FGYD), K176, and 181–182 (HR).

The protein belongs to the HAM1 NTPase family. As to quaternary structure, homodimer. Mg(2+) serves as cofactor.

It carries out the reaction XTP + H2O = XMP + diphosphate + H(+). The catalysed reaction is dITP + H2O = dIMP + diphosphate + H(+). It catalyses the reaction ITP + H2O = IMP + diphosphate + H(+). Its function is as follows. Pyrophosphatase that catalyzes the hydrolysis of nucleoside triphosphates to their monophosphate derivatives, with a high preference for the non-canonical purine nucleotides XTP (xanthosine triphosphate), dITP (deoxyinosine triphosphate) and ITP. Seems to function as a house-cleaning enzyme that removes non-canonical purine nucleotides from the nucleotide pool, thus preventing their incorporation into DNA/RNA and avoiding chromosomal lesions. The polypeptide is dITP/XTP pyrophosphatase (Leptospira interrogans serogroup Icterohaemorrhagiae serovar copenhageni (strain Fiocruz L1-130)).